Consider the following 391-residue polypeptide: Digeranylgeranylglycerophospholipid reductase (391 aa).

10 residues coordinate FAD: Gly19, Asp38, Cys49, Ala50, Ala52, Arg99, Val123, Asp279, Gly291, and Ile292. Residue Val369 coordinates a 2,3-bis-O-(geranylgeranyl)-sn-glycerol 1-phospholipid.

This sequence belongs to the geranylgeranyl reductase family. DGGGPL reductase subfamily. FAD is required as a cofactor.

It catalyses the reaction a 2,3-bis-O-phytanyl-sn-glycerol 1-phospholipid + 8 A = a 2,3-bis-O-(geranylgeranyl)-sn-glycerol 1-phospholipid + 8 AH2. It carries out the reaction 2,3-bis-O-(phytanyl)-sn-glycerol 1-phosphate + 8 A = 2,3-bis-O-(geranylgeranyl)-sn-glycerol 1-phosphate + 8 AH2. The catalysed reaction is CDP-2,3-bis-O-(geranylgeranyl)-sn-glycerol + 8 AH2 = CDP-2,3-bis-O-(phytanyl)-sn-glycerol + 8 A. The enzyme catalyses archaetidylserine + 8 AH2 = 2,3-bis-O-phytanyl-sn-glycero-3-phospho-L-serine + 8 A. It functions in the pathway membrane lipid metabolism; glycerophospholipid metabolism. Functionally, is involved in the reduction of 2,3-digeranylgeranylglycerophospholipids (unsaturated archaeols) into 2,3-diphytanylglycerophospholipids (saturated archaeols) in the biosynthesis of archaeal membrane lipids. Catalyzes the formation of archaetidic acid (2,3-di-O-phytanyl-sn-glyceryl phosphate) from 2,3-di-O-geranylgeranylglyceryl phosphate (DGGGP) via the hydrogenation of each double bond of the isoprenoid chains. Is also probably able to reduce double bonds of geranyl groups in CDP-2,3-bis-O-(geranylgeranyl)-sn-glycerol and archaetidylserine, thus acting at various stages in the biosynthesis of archaeal membrane lipids. This Methanococcus aeolicus (strain ATCC BAA-1280 / DSM 17508 / OCM 812 / Nankai-3) protein is Digeranylgeranylglycerophospholipid reductase.